Consider the following 307-residue polypeptide: Glutathione synthetase (307 aa).

The ATP-grasp domain occupies 120–304; that stretch reads KLGALRYSHL…VSDKVIEKLL (185 aa). 146–202 lines the ATP pocket; sequence AQINHDVVVKPLGGKGGQGVIRLTKDSPGIKAMIELITSQEQLPVMMQKFIPEVKEG. The Mg(2+) site is built by Glu-275 and Asn-277.

The protein belongs to the prokaryotic GSH synthase family. The cofactor is Mg(2+). Mn(2+) is required as a cofactor.

It catalyses the reaction gamma-L-glutamyl-L-cysteine + glycine + ATP = glutathione + ADP + phosphate + H(+). It participates in sulfur metabolism; glutathione biosynthesis; glutathione from L-cysteine and L-glutamate: step 2/2. The polypeptide is Glutathione synthetase (Prochlorococcus marinus subsp. pastoris (strain CCMP1986 / NIES-2087 / MED4)).